The following is a 208-amino-acid chain: Cytochrome c biogenesis ATP-binding export protein CcmA (208 aa).

Residues 2–206 (LEAKELTCAR…IRLTAEGRDE (205 aa)) form the ABC transporter domain. Position 34 to 41 (34 to 41 (GPNGAGKT)) interacts with ATP.

It belongs to the ABC transporter superfamily. CcmA exporter (TC 3.A.1.107) family. In terms of assembly, the complex is composed of two ATP-binding proteins (CcmA) and two transmembrane proteins (CcmB).

Its subcellular location is the cell inner membrane. The catalysed reaction is heme b(in) + ATP + H2O = heme b(out) + ADP + phosphate + H(+). Functionally, part of the ABC transporter complex CcmAB involved in the biogenesis of c-type cytochromes; once thought to export heme, this seems not to be the case, but its exact role is uncertain. Responsible for energy coupling to the transport system. The chain is Cytochrome c biogenesis ATP-binding export protein CcmA from Tatumella citrea (Pantoea citrea).